The sequence spans 689 residues: Acetyl-coenzyme A synthetase 2-like, mitochondrial (689 aa).

The transit peptide at 1–37 directs the protein to the mitochondrion; the sequence is MAARTLGRGVGRLLGSLRGLSGQPARPPCGVSAPRRA. A disordered region spans residues 17-46; the sequence is LRGLSGQPARPPCGVSAPRRAASGPSGSAP. The segment covering 32–46 has biased composition (low complexity); the sequence is SAPRRAASGPSGSAP. CoA is bound by residues 224 to 227 and threonine 341; that span reads RGGR. Lysine 396 is subject to N6-acetyllysine. ATP contacts are provided by residues 417–419, 441–446, aspartate 533, and arginine 548; these read GEP and DTWWQT. Serine 556 provides a ligand contact to CoA. Arginine 559 contributes to the ATP binding site. An N6-acetyllysine modification is found at lysine 642.

This sequence belongs to the ATP-dependent AMP-binding enzyme family. Interacts with SIRT3. Post-translationally, reversibly acetylated on Lys-642. The acetyl-CoA synthase activity is inhibited by acetylation and activated by deacetylation mediated by the deacetylase SIRT3.

It is found in the mitochondrion matrix. It carries out the reaction acetate + ATP + CoA = acetyl-CoA + AMP + diphosphate. The catalysed reaction is propanoate + ATP + CoA = propanoyl-CoA + AMP + diphosphate. Inhibited by acetylation at Lys-642 and activated by deacetylation mediated by the deacetylase SIRT3. Catalyzes the synthesis of acetyl-CoA from short-chain fatty acids. Acetate is the preferred substrate. Can also utilize propionate with a much lower affinity. Provides acetyl-CoA that is utilized mainly for oxidation under ketogenic conditions. Involved in thermogenesis under ketogenic conditions, using acetate as a vital fuel when carbohydrate availability is insufficient. This is Acetyl-coenzyme A synthetase 2-like, mitochondrial (ACSS1) from Homo sapiens (Human).